The following is a 275-amino-acid chain: Vitamin B12-binding protein (275 aa).

An N-terminal signal peptide occupies residues 1–27 (MKWIKSTGSIGLSLLLFLSSFSHSLYA). In terms of domain architecture, Fe/B12 periplasmic-binding spans 31-275 (RVISLSPSTT…LCQQLNDNGS (245 aa)). Tyrosine 58 contributes to the cyanocob(III)alamin binding site. Cysteine 191 and cysteine 267 are joined by a disulfide.

It belongs to the BtuF family. The complex is composed of two ATP-binding proteins (BtuD), two transmembrane proteins (BtuC) and a solute-binding protein (BtuF).

It is found in the periplasm. Functionally, part of the ABC transporter complex BtuCDF involved in vitamin B12 import. Binds vitamin B12 and delivers it to the periplasmic surface of BtuC. In Photorhabdus laumondii subsp. laumondii (strain DSM 15139 / CIP 105565 / TT01) (Photorhabdus luminescens subsp. laumondii), this protein is Vitamin B12-binding protein.